Here is a 480-residue protein sequence, read N- to C-terminus: Transposase for transposon Tn552 (480 aa).

A DNA-binding region (H-T-H motif) is located at residues 36–55 (LSSISKSKGIALSTLYRWNK). Residues 155–341 (ESSRPNEIWQ…TPINRWNSNH (187 aa)) form the Integrase catalytic domain. Residues 438 to 480 (RKHLKQNIASPSTTDLIKEEKSYGYSPQETTKNVKKLKRYRND) are disordered. A compositionally biased stretch (basic residues) spans 470–480 (NVKKLKRYRND).

This is Transposase for transposon Tn552 from Staphylococcus aureus.